The sequence spans 512 residues: Cytochrome P450 1A1 (512 aa).

The segment at 29 to 40 (SRPRVPKGLKNP) is mitochondrial targeting signal. Serine 67 carries an O-linked (GlcNAc) serine glycan. Phenylalanine 224 contacts substrate. Position 457 (cysteine 457) interacts with heme.

It belongs to the cytochrome P450 family. In terms of assembly, interacts with cytosolic chaperones HSP70 and HSP90; this interaction is required for initial targeting to mitochondria. Interacts (via mitochondrial targeting signal) with TOMM40 (via N-terminus); this interaction is required for translocation across the mitochondrial outer membrane. Heme serves as cofactor.

The protein localises to the endoplasmic reticulum membrane. It localises to the mitochondrion inner membrane. Its subcellular location is the microsome membrane. The protein resides in the cytoplasm. The catalysed reaction is an organic molecule + reduced [NADPH--hemoprotein reductase] + O2 = an alcohol + oxidized [NADPH--hemoprotein reductase] + H2O + H(+). The enzyme catalyses estrone + reduced [NADPH--hemoprotein reductase] + O2 = 2-hydroxyestrone + oxidized [NADPH--hemoprotein reductase] + H2O + H(+). It catalyses the reaction estrone + reduced [NADPH--hemoprotein reductase] + O2 = 4-hydroxyestrone + oxidized [NADPH--hemoprotein reductase] + H2O + H(+). It carries out the reaction estrone + reduced [NADPH--hemoprotein reductase] + O2 = 6alpha-hydroxyestrone + oxidized [NADPH--hemoprotein reductase] + H2O + H(+). The catalysed reaction is estrone + reduced [NADPH--hemoprotein reductase] + O2 = 15alpha-hydroxyestrone + oxidized [NADPH--hemoprotein reductase] + H2O + H(+). The enzyme catalyses estrone + reduced [NADPH--hemoprotein reductase] + O2 = 16alpha-hydroxyestrone + oxidized [NADPH--hemoprotein reductase] + H2O + H(+). It catalyses the reaction 17beta-estradiol + reduced [NADPH--hemoprotein reductase] + O2 = 2-hydroxy-17beta-estradiol + oxidized [NADPH--hemoprotein reductase] + H2O + H(+). It carries out the reaction 17beta-estradiol + reduced [NADPH--hemoprotein reductase] + O2 = 4-hydroxy-17beta-estradiol + oxidized [NADPH--hemoprotein reductase] + H2O + H(+). The catalysed reaction is 17beta-estradiol + reduced [NADPH--hemoprotein reductase] + O2 = 6alpha-hydroxy-17beta-estradiol + oxidized [NADPH--hemoprotein reductase] + H2O + H(+). The enzyme catalyses 17beta-estradiol + reduced [NADPH--hemoprotein reductase] + O2 = 7alpha-hydroxy-17beta-estradiol + oxidized [NADPH--hemoprotein reductase] + H2O + H(+). It catalyses the reaction 17beta-estradiol + reduced [NADPH--hemoprotein reductase] + O2 = 15alpha-hydroxy-17beta-estradiol + oxidized [NADPH--hemoprotein reductase] + H2O + H(+). It carries out the reaction (5Z,8Z,11Z)-eicosatrienoate + reduced [NADPH--hemoprotein reductase] + O2 = 19-hydroxy-(5Z,8Z,11Z)-eicosatrienoate + oxidized [NADPH--hemoprotein reductase] + H2O + H(+). The catalysed reaction is (5Z,8Z,11Z,14Z)-eicosatetraenoate + reduced [NADPH--hemoprotein reductase] + O2 = 16-hydroxy-(5Z,8Z,11Z,14Z)-eicosatetraenoate + oxidized [NADPH--hemoprotein reductase] + H2O + H(+). The enzyme catalyses (5Z,8Z,11Z,14Z)-eicosatetraenoate + reduced [NADPH--hemoprotein reductase] + O2 = 17-hydroxy-(5Z,8Z,11Z,14Z)-eicosatetraenoate + oxidized [NADPH--hemoprotein reductase] + H2O + H(+). It catalyses the reaction (5Z,8Z,11Z,14Z)-eicosatetraenoate + reduced [NADPH--hemoprotein reductase] + O2 = 18-hydroxy-(5Z,8Z,11Z,14Z)-eicosatetraenoate + oxidized [NADPH--hemoprotein reductase] + H2O + H(+). It carries out the reaction (5Z,8Z,11Z,14Z)-eicosatetraenoate + reduced [NADPH--hemoprotein reductase] + O2 = 19-hydroxy-(5Z,8Z,11Z,14Z)-eicosatetraenoate + oxidized [NADPH--hemoprotein reductase] + H2O + H(+). The catalysed reaction is (5Z,8Z,11Z,14Z,17Z)-eicosapentaenoate + reduced [NADPH--hemoprotein reductase] + O2 = 19-hydroxy-(5Z,8Z,11Z,14Z,17Z)-eicosapentaenoate + oxidized [NADPH--hemoprotein reductase] + H2O + H(+). The enzyme catalyses (5Z,8Z,11Z,14Z)-eicosatetraenoate + reduced [NADPH--hemoprotein reductase] + O2 = (8R,9S)-epoxy-(5Z,11Z,14Z)-eicosatrienoate + oxidized [NADPH--hemoprotein reductase] + H2O + H(+). It catalyses the reaction (5Z,8Z,11Z,14Z)-eicosatetraenoate + reduced [NADPH--hemoprotein reductase] + O2 = (11R,12S)-epoxy-(5Z,8Z,14Z)-eicosatrienoate + oxidized [NADPH--hemoprotein reductase] + H2O + H(+). It carries out the reaction (5Z,8Z,11Z,14Z)-eicosatetraenoate + reduced [NADPH--hemoprotein reductase] + O2 = (14S,15R)-epoxy-(5Z,8Z,11Z)-eicosatrienoate + oxidized [NADPH--hemoprotein reductase] + H2O + H(+). The catalysed reaction is (5Z,8Z,11Z,14Z)-eicosatetraenoate + reduced [NADPH--hemoprotein reductase] + O2 = (14R,15S)-epoxy-(5Z,8Z,11Z)-eicosatrienoate + oxidized [NADPH--hemoprotein reductase] + H2O + H(+). The enzyme catalyses (5Z,8Z,11Z,14Z,17Z)-eicosapentaenoate + reduced [NADPH--hemoprotein reductase] + O2 = (17R,18S)-epoxy-(5Z,8Z,11Z,14Z)-eicosatetraenoate + oxidized [NADPH--hemoprotein reductase] + H2O + H(+). It catalyses the reaction (4Z,7Z,10Z,13Z,16Z,19Z)-docosahexaenoate + reduced [NADPH--hemoprotein reductase] + O2 = (19S,20R)-epoxy-(4Z,7Z,10Z,13Z,16Z)-docosapentaenoate + oxidized [NADPH--hemoprotein reductase] + H2O + H(+). It carries out the reaction (4Z,7Z,10Z,13Z,16Z,19Z)-docosahexaenoate + reduced [NADPH--hemoprotein reductase] + O2 = (19R,20S)-epoxy-(4Z,7Z,10Z,13Z,16Z)-docosapentaenoate + oxidized [NADPH--hemoprotein reductase] + H2O + H(+). The catalysed reaction is all-trans-retinol + reduced [NADPH--hemoprotein reductase] + O2 = all-trans-retinal + oxidized [NADPH--hemoprotein reductase] + 2 H2O + H(+). The enzyme catalyses all-trans-retinal + reduced [NADPH--hemoprotein reductase] + O2 = all-trans-retinoate + oxidized [NADPH--hemoprotein reductase] + H2O + 2 H(+). It catalyses the reaction (13S)-hydroperoxy-(9Z,11E)-octadecadienoate = 13-oxo-(9Z,11E)-octadecadienoate + H2O. It carries out the reaction (12S)-hydroperoxy-(5Z,8Z,10E,14Z)-eicosatetraenoate = 12-oxo-(5Z,8Z,10E,14Z)-eicosatetraenoate + H2O. The catalysed reaction is (15S)-hydroperoxy-(5Z,8Z,11Z,13E)-eicosatetraenoate = 15-oxo-(5Z,8Z,11Z,13E)-eicosatetraenoate + H2O. The enzyme catalyses (5S)-hydroperoxy-(6E,8Z,11Z,14Z)-eicosatetraenoate = 5-oxo-(6E,8Z,11Z,14Z)-eicosatetraenoate + H2O. It functions in the pathway steroid hormone biosynthesis. It participates in lipid metabolism; fatty acid metabolism. The protein operates within cofactor metabolism; retinol metabolism. Functionally, a cytochrome P450 monooxygenase involved in the metabolism of various endogenous substrates, including fatty acids, steroid hormones and vitamins. Mechanistically, uses molecular oxygen inserting one oxygen atom into a substrate, and reducing the second into a water molecule, with two electrons provided by NADPH via cytochrome P450 reductase (CPR; NADPH-ferrihemoprotein reductase). Catalyzes the hydroxylation of carbon-hydrogen bonds. Exhibits high catalytic activity for the formation of hydroxyestrogens from estrone (E1) and 17beta-estradiol (E2), namely 2-hydroxy E1 and E2, as well as D-ring hydroxylated E1 and E2 at the C15alpha and C16alpha positions. Displays different regioselectivities for polyunsaturated fatty acids (PUFA) hydroxylation. Catalyzes the epoxidation of double bonds of certain PUFA. Converts arachidonic acid toward epoxyeicosatrienoic acid (EET) regioisomers, 8,9-, 11,12-, and 14,15-EET, that function as lipid mediators in the vascular system. Displays an absolute stereoselectivity in the epoxidation of eicosapentaenoic acid (EPA) producing the 17(R),18(S) enantiomer. May play an important role in all-trans retinoic acid biosynthesis in extrahepatic tissues. Catalyzes two successive oxidative transformation of all-trans retinol to all-trans retinal and then to the active form all-trans retinoic acid. May also participate in eicosanoids metabolism by converting hydroperoxide species into oxo metabolites (lipoxygenase-like reaction, NADPH-independent). The polypeptide is Cytochrome P450 1A1 (CYP1A1) (Macaca fascicularis (Crab-eating macaque)).